Reading from the N-terminus, the 328-residue chain is DNA-directed RNA polymerase subunit alpha (328 aa).

The alpha N-terminal domain (alpha-NTD) stretch occupies residues 1 to 231 (MIQQMQMPEK…DHVRLFSLFS (231 aa)). The alpha C-terminal domain (alpha-CTD) stretch occupies residues 252 to 328 (MRKLLMTRIE…MEVTKYRLNQ (77 aa)).

It belongs to the RNA polymerase alpha chain family. Homodimer. The RNAP catalytic core consists of 2 alpha, 1 beta, 1 beta' and 1 omega subunit. When a sigma factor is associated with the core the holoenzyme is formed, which can initiate transcription.

It catalyses the reaction RNA(n) + a ribonucleoside 5'-triphosphate = RNA(n+1) + diphosphate. Its function is as follows. DNA-dependent RNA polymerase catalyzes the transcription of DNA into RNA using the four ribonucleoside triphosphates as substrates. The sequence is that of DNA-directed RNA polymerase subunit alpha from Chloroherpeton thalassium (strain ATCC 35110 / GB-78).